Here is a 295-residue protein sequence, read N- to C-terminus: Fructose-bisphosphate aldolase class 1 (295 aa).

The active-site Proton acceptor is E176. K213 serves as the catalytic Schiff-base intermediate with dihydroxyacetone-P.

The protein belongs to the class I fructose-bisphosphate aldolase family.

The enzyme catalyses beta-D-fructose 1,6-bisphosphate = D-glyceraldehyde 3-phosphate + dihydroxyacetone phosphate. It participates in carbohydrate degradation; glycolysis; D-glyceraldehyde 3-phosphate and glycerone phosphate from D-glucose: step 4/4. This Clostridium acetobutylicum (strain ATCC 824 / DSM 792 / JCM 1419 / IAM 19013 / LMG 5710 / NBRC 13948 / NRRL B-527 / VKM B-1787 / 2291 / W) protein is Fructose-bisphosphate aldolase class 1.